The chain runs to 566 residues: Urease subunit alpha (566 aa).

The Urease domain occupies 128–566; sequence GGIDTHIHFI…LPMAQRYFLF (439 aa). Ni(2+) contacts are provided by His133, His135, and Lys216. N6-carboxylysine is present on Lys216. Position 218 (His218) interacts with substrate. Ni(2+)-binding residues include His245 and His271. His319 functions as the Proton donor in the catalytic mechanism. Asp359 contributes to the Ni(2+) binding site.

This sequence belongs to the metallo-dependent hydrolases superfamily. Urease alpha subunit family. As to quaternary structure, heterotrimer of UreA (gamma), UreB (beta) and UreC (alpha) subunits. Three heterotrimers associate to form the active enzyme. Ni cation is required as a cofactor. Post-translationally, carboxylation allows a single lysine to coordinate two nickel ions.

The protein resides in the cytoplasm. The catalysed reaction is urea + 2 H2O + H(+) = hydrogencarbonate + 2 NH4(+). The protein operates within nitrogen metabolism; urea degradation; CO(2) and NH(3) from urea (urease route): step 1/1. The chain is Urease subunit alpha from Pseudomonas fluorescens (strain Pf0-1).